We begin with the raw amino-acid sequence, 322 residues long: Undecaprenyl-phosphate 4-deoxy-4-formamido-L-arabinose transferase (322 aa).

The Cytoplasmic segment spans residues 1–235 (MFEIHPVKKV…TCLTTTPLRM (235 aa)). A helical membrane pass occupies residues 236 to 256 (LSLLGSIIAIGGFSIAVLLVI). At 257-269 (LRLTFGPQWAAEG) the chain is on the periplasmic side. Residues 270–290 (VFMLFAVLFTFIGAQFIGMGL) form a helical membrane-spanning segment. Residues 291 to 322 (LGEYIGRIYTDVRARPRYFVQQVIRPSSKENE) lie on the Cytoplasmic side of the membrane.

This sequence belongs to the glycosyltransferase 2 family.

Its subcellular location is the cell inner membrane. The catalysed reaction is UDP-4-deoxy-4-formamido-beta-L-arabinose + di-trans,octa-cis-undecaprenyl phosphate = 4-deoxy-4-formamido-alpha-L-arabinopyranosyl di-trans,octa-cis-undecaprenyl phosphate + UDP. It participates in glycolipid biosynthesis; 4-amino-4-deoxy-alpha-L-arabinose undecaprenyl phosphate biosynthesis; 4-amino-4-deoxy-alpha-L-arabinose undecaprenyl phosphate from UDP-4-deoxy-4-formamido-beta-L-arabinose and undecaprenyl phosphate: step 1/2. It functions in the pathway bacterial outer membrane biogenesis; lipopolysaccharide biosynthesis. Catalyzes the transfer of 4-deoxy-4-formamido-L-arabinose from UDP to undecaprenyl phosphate. The modified arabinose is attached to lipid A and is required for resistance to polymyxin and cationic antimicrobial peptides. The polypeptide is Undecaprenyl-phosphate 4-deoxy-4-formamido-L-arabinose transferase (Escherichia coli (strain SMS-3-5 / SECEC)).